A 228-amino-acid polypeptide reads, in one-letter code: RING1 and YY1-binding protein (228 aa).

Disordered stretches follow at residues 1-21 (MTMGDKKSPTRPKRQAKPAAD), 65-156 (QVAQ…RSTA), and 172-228 (DFKE…DESF). The RanBP2-type zinc-finger motif lies at 21-50 (DEGFWDCSVCTFRNSAEAFKCSICDVRKGT). A compositionally biased stretch (basic and acidic residues) spans 76 to 98 (PKKEKKEKVEKQDKEKPEKDKEI). Lys-77 participates in a covalent cross-link: Glycyl lysine isopeptide (Lys-Gly) (interchain with G-Cter in SUMO2). Position 99 is a phosphoserine (Ser-99). The segment covering 113–122 (PKSDILKDPP) has biased composition (basic and acidic residues). A phosphoserine mark is found at Ser-123, Ser-127, and Ser-130. The segment covering 124-143 (EANSIQSANATTKTSETNHT) has biased composition (polar residues). The segment at 143–226 (TSRPRLKNVD…KGDMSAVNDE (84 aa)) is interaction with GABPB1 and FANK1. A compositionally biased stretch (low complexity) spans 179 to 204 (SSSTSSSTVTSSAGSEQQNQSSSGSE). The residue at position 227 (Ser-227) is a Phosphoserine.

In terms of assembly, monomer. Component of repressive BCOR complex containing Polycomb group subcomplex at least composed of BCOR, PCGF1, RING1 and RNF2/RING2. Component of PCR1-like complexes. Interacts with PCGF1. Part of a PCR1-like complex that contains AUTS2, PCGF5, RNF2, CSNK2B and RYBP. Interacts with RNF2; the interaction is direct. Interacts with CBX2, YAF2, RING1 and RNF2. Interacts with ubiquitin and ubiquitinated proteins. Interacts with ubiquitinated histone H2A. Interacts with apoptin, DEDD, FADD, CASP8, CASP10, YY1 and GABPB1. Together with GABPB1 and YY1, it forms a ternary complex, probably being the bridge factor between these two transcription factors. Interacts with MDM2, and thereby inhibits ubiquitination of TP53. Identified in a ternary complex containing MDM2, TP53 and RYBP. Interacts with FANK1; may prevent the ubiquitin-mediated proteasomal degradation of FANK1. Interacts with IFT57. Monoubiquitinated. In terms of tissue distribution, down-regulated in breast cancer tissues and in several breast cancer cell lines (at protein level). Widely expressed with highest levels in lymphoid tissues and placenta.

It is found in the nucleus. The protein resides in the cytoplasm. Its subcellular location is the nucleoplasm. Component of a Polycomb group (PcG) multiprotein PRC1-like complex, a complex class required to maintain the transcriptionally repressive state of many genes, including Hox genes, throughout development. PcG PRC1-like complex acts via chromatin remodeling and modification of histones; it mediates monoubiquitination of histone H2A 'Lys-119', rendering chromatin heritably changed in its expressibility. Component of a PRC1-like complex that mediates monoubiquitination of histone H2A 'Lys-119' on the X chromosome and is required for normal silencing of one copy of the X chromosome in XX females. May stimulate ubiquitination of histone H2A 'Lys-119' by recruiting the complex to target sites. Inhibits ubiquitination and subsequent degradation of TP53, and thereby plays a role in regulating transcription of TP53 target genes. May also regulate the ubiquitin-mediated proteasomal degradation of other proteins like FANK1 to regulate apoptosis. May be implicated in the regulation of the transcription as a repressor of the transcriptional activity of E4TF1. May bind to DNA. May play a role in the repression of tumor growth and metastasis in breast cancer by down-regulating SRRM3. This is RING1 and YY1-binding protein (RYBP) from Homo sapiens (Human).